We begin with the raw amino-acid sequence, 329 residues long: Uroporphyrinogen decarboxylase (329 aa).

Substrate contacts are provided by residues 22–26, Asp-71, Tyr-140, Ser-195, and His-307; that span reads RQVGR.

Belongs to the uroporphyrinogen decarboxylase family. In terms of assembly, homodimer.

Its subcellular location is the cytoplasm. The enzyme catalyses uroporphyrinogen III + 4 H(+) = coproporphyrinogen III + 4 CO2. Its pathway is porphyrin-containing compound metabolism; protoporphyrin-IX biosynthesis; coproporphyrinogen-III from 5-aminolevulinate: step 4/4. Catalyzes the decarboxylation of four acetate groups of uroporphyrinogen-III to yield coproporphyrinogen-III. The sequence is that of Uroporphyrinogen decarboxylase from Chlamydia pneumoniae (Chlamydophila pneumoniae).